The following is a 467-amino-acid chain: Nuclear distribution protein nudF 1 (467 aa).

The LisH domain occupies 9 to 41; it reads QAEELHKSIIAYLASVNLSESATTLRAELGDAV. Positions 60–87 form a coiled coil; it reads TSVVRLQKKIMDLESRCAALQSELDSAT. WD repeat units follow at residues 113–154, 156–196, 200–247, 250–289, 292–352, 354–393, 398–428, and 429–466; these read SHRS…RTVK, HTKA…KNIR, GHDH…CVKT, GHVD…TRST, GHEH…IKTL, GHDN…KCVR, THEH…NGTP, and AATT…RVFA. Over residues 417–437 the composition is skewed to low complexity; sequence GANGDAGANGTPAATTTSNGA. A disordered region spans residues 417-441; sequence GANGDAGANGTPAATTTSNGARQDP.

The protein belongs to the WD repeat LIS1/nudF family. In terms of assembly, self-associates. Interacts with nudE and dynein.

It localises to the cytoplasm. It is found in the cytoskeleton. The protein localises to the spindle pole. In terms of biological role, positively regulates the activity of the minus-end directed microtubule motor protein dynein. May enhance dynein-mediated microtubule sliding by targeting dynein to the microtubule plus end. Required for nuclear migration during vegetative growth as well as development. Required for retrograde early endosome (EE) transport from the hyphal tip. Required for localization of dynein to the mitotic spindle poles. Recruits additional proteins to the dynein complex at SPBs. The sequence is that of Nuclear distribution protein nudF 1 from Aspergillus clavatus (strain ATCC 1007 / CBS 513.65 / DSM 816 / NCTC 3887 / NRRL 1 / QM 1276 / 107).